The chain runs to 770 residues: Probable capsid and replication-associated protein (770 aa).

2 disordered regions span residues 645 to 682 (QRMQ…QKES) and 697 to 717 (WEDS…TQTV). The span at 646–656 (RMQQQPTTTDI) shows a compositional bias: polar residues. Residues 666–681 (RDTEVYHSSQEGEQKE) show a composition bias toward basic and acidic residues. A compositionally biased stretch (low complexity) spans 703-717 (EESGSQSSEEETQTV).

The protein belongs to the anelloviridae capsid protein family.

The protein localises to the virion. In terms of biological role, may self assemble to form an icosahedral capsid. Presumably essential to initiate and monitor viral genome replication by a rolling circle mechanism. This is Probable capsid and replication-associated protein from Homo sapiens (Human).